Consider the following 86-residue polypeptide: Toxin CSTX-20 (86 aa).

Expressed by the venom gland.

It is found in the secreted. The protein is Toxin CSTX-20 of Cupiennius salei (American wandering spider).